The following is a 276-amino-acid chain: NADPH-dependent 7-cyano-7-deazaguanine reductase (276 aa).

A substrate-binding site is contributed by 80–82 (IES). 82 to 83 (SK) is a binding site for NADPH. C178 acts as the Thioimide intermediate in catalysis. Residue D185 is the Proton donor of the active site. 217 to 218 (HE) contacts substrate. Residue 246 to 247 (RG) participates in NADPH binding.

This sequence belongs to the GTP cyclohydrolase I family. QueF type 2 subfamily. As to quaternary structure, homodimer.

It is found in the cytoplasm. The catalysed reaction is 7-aminomethyl-7-carbaguanine + 2 NADP(+) = 7-cyano-7-deazaguanine + 2 NADPH + 3 H(+). It functions in the pathway tRNA modification; tRNA-queuosine biosynthesis. Functionally, catalyzes the NADPH-dependent reduction of 7-cyano-7-deazaguanine (preQ0) to 7-aminomethyl-7-deazaguanine (preQ1). This is NADPH-dependent 7-cyano-7-deazaguanine reductase from Teredinibacter turnerae (strain ATCC 39867 / T7901).